Here is a 186-residue protein sequence, read N- to C-terminus: MNQAFWKTYKSKVLQTLSGESEEDLAEERENPALVGSETAEPTEETFNPMSQLARRVQGVGVKGWLTMSSLFNKEDEDKLLPSEPCADHPLAARPPSQAAAAAEARGPGFWDAFASRWQQQQAAAASMLRGTEPTPEPDPEPADEAAEEAAERPESQEAEPVAGFKWGFLTHKLAEMRVKAAPKGD.

3 disordered regions span residues 17–47 (LSGESEEDLAEERENPALVGSETAEPTEETF), 77–105 (EDKLLPSEPCADHPLAARPPSQAAAAAEA), and 121–164 (QQAA…PVAG). A compositionally biased stretch (low complexity) spans 90–105 (PLAARPPSQAAAAAEA). Residues 136–149 (PEPDPEPADEAAEE) are compositionally biased toward acidic residues.

This is an uncharacterized protein from Homo sapiens (Human).